The sequence spans 226 residues: N-(5'-phosphoribosyl)anthranilate isomerase (226 aa).

It belongs to the TrpF family.

It carries out the reaction N-(5-phospho-beta-D-ribosyl)anthranilate = 1-(2-carboxyphenylamino)-1-deoxy-D-ribulose 5-phosphate. Its pathway is amino-acid biosynthesis; L-tryptophan biosynthesis; L-tryptophan from chorismate: step 3/5. This is N-(5'-phosphoribosyl)anthranilate isomerase (TRP1) from Saccharomyces kudriavzevii (strain ATCC MYA-4449 / AS 2.2408 / CBS 8840 / NBRC 1802 / NCYC 2889) (Yeast).